The following is a 199-amino-acid chain: Recombination protein RecR (199 aa).

Residues 57 to 72 form a C4-type zinc finger; that stretch reads CQSCRTFTEQSLCPIC. Positions 81 to 176 constitute a Toprim domain; it reads GVICVVETPA…IISRIAHGVP (96 aa).

It belongs to the RecR family.

In terms of biological role, may play a role in DNA repair. It seems to be involved in an RecBC-independent recombinational process of DNA repair. It may act with RecF and RecO. The polypeptide is Recombination protein RecR (Shewanella denitrificans (strain OS217 / ATCC BAA-1090 / DSM 15013)).